Consider the following 29-residue polypeptide: Brevinin-2Rd (29 aa).

Cysteine 23 and cysteine 29 form a disulfide bridge.

In terms of tissue distribution, expressed by the skin glands.

Its subcellular location is the secreted. Its function is as follows. Antimicrobial peptide. The chain is Brevinin-2Rd from Pelophylax ridibundus (Marsh frog).